A 254-amino-acid polypeptide reads, in one-letter code: 4-hydroxy-tetrahydrodipicolinate reductase (254 aa).

An NAD(+)-binding site is contributed by 7–12 (GASGRI). Position 35 (arginine 35) interacts with NADP(+). NAD(+) contacts are provided by residues 91–93 (GTT) and 115–118 (AHNM). Histidine 147 (proton donor/acceptor) is an active-site residue. (S)-2,3,4,5-tetrahydrodipicolinate is bound at residue histidine 148. Lysine 151 serves as the catalytic Proton donor. 157–158 (GT) lines the (S)-2,3,4,5-tetrahydrodipicolinate pocket.

The protein belongs to the DapB family.

The protein localises to the cytoplasm. It catalyses the reaction (S)-2,3,4,5-tetrahydrodipicolinate + NAD(+) + H2O = (2S,4S)-4-hydroxy-2,3,4,5-tetrahydrodipicolinate + NADH + H(+). The enzyme catalyses (S)-2,3,4,5-tetrahydrodipicolinate + NADP(+) + H2O = (2S,4S)-4-hydroxy-2,3,4,5-tetrahydrodipicolinate + NADPH + H(+). It functions in the pathway amino-acid biosynthesis; L-lysine biosynthesis via DAP pathway; (S)-tetrahydrodipicolinate from L-aspartate: step 4/4. Its function is as follows. Catalyzes the conversion of 4-hydroxy-tetrahydrodipicolinate (HTPA) to tetrahydrodipicolinate. This is 4-hydroxy-tetrahydrodipicolinate reductase from Helicobacter pylori (strain HPAG1).